The following is a 433-amino-acid chain: Cell adhesion molecule 2 (433 aa).

The first 24 residues, 1–24 (MILQPSALLCLSSLWGVIVQASQG), serve as a signal peptide directing secretion. At 25–365 (QFPVTQNVTV…ALPGPVATDH (341 aa)) the chain is on the extracellular side. Positions 27–114 (PVTQNVTVVE…SLFTMPVKTS (88 aa)) constitute an Ig-like V-type domain. 3 N-linked (GlcNAc...) asparagine glycosylation sites follow: asparagine 31, asparagine 41, and asparagine 51. 3 disulfide bridges follow: cysteine 44-cysteine 104, cysteine 146-cysteine 203, and cysteine 248-cysteine 296. 2 Ig-like C2-type domains span residues 127–217 (PHIS…PQIA) and 227–312 (PTVR…YVLI). Residues asparagine 287 and asparagine 291 are each glycosylated (N-linked (GlcNAc...) asparagine). The chain crosses the membrane as a helical span at residues 366 to 386 (ALIGGVVAVVVFVTLCSIILI). The Cytoplasmic portion of the chain corresponds to 387-433 (GRYLARHKGTYLTNEAKGAEDAPDADTAIINAEGSQVNAEEKKEYFI).

It belongs to the nectin family.

Its subcellular location is the membrane. The protein is Cell adhesion molecule 2 (cadm2) of Xenopus tropicalis (Western clawed frog).